The primary structure comprises 45 residues: Large ribosomal subunit protein bL36 (45 aa).

The protein belongs to the bacterial ribosomal protein bL36 family.

The sequence is that of Large ribosomal subunit protein bL36 from Aliivibrio salmonicida (strain LFI1238) (Vibrio salmonicida (strain LFI1238)).